Here is a 368-residue protein sequence, read N- to C-terminus: tRNA-specific 2-thiouridylase MnmA (368 aa).

ATP-binding positions include 11 to 18 (GMSGGVDS) and methionine 37. Residues 97 to 99 (NPD) form an interaction with target base in tRNA region. Cysteine 102 (nucleophile) is an active-site residue. Residues cysteine 102 and cysteine 199 are joined by a disulfide bond. Residue glycine 127 coordinates ATP. Positions 149–151 (KDQ) are interaction with tRNA. Cysteine 199 (cysteine persulfide intermediate) is an active-site residue. An interaction with tRNA region spans residues 311-312 (RY).

Belongs to the MnmA/TRMU family. In terms of assembly, interacts with TusE.

The protein localises to the cytoplasm. The catalysed reaction is S-sulfanyl-L-cysteinyl-[protein] + uridine(34) in tRNA + AH2 + ATP = 2-thiouridine(34) in tRNA + L-cysteinyl-[protein] + A + AMP + diphosphate + H(+). In terms of biological role, catalyzes the 2-thiolation of uridine at the wobble position (U34) of tRNA(Lys), tRNA(Glu) and tRNA(Gln), leading to the formation of s(2)U34, the first step of tRNA-mnm(5)s(2)U34 synthesis. Sulfur is provided by IscS, via a sulfur-relay system. Binds ATP and its substrate tRNAs. In Salmonella choleraesuis (strain SC-B67), this protein is tRNA-specific 2-thiouridylase MnmA.